Consider the following 705-residue polypeptide: Elongation factor G (705 aa).

The tr-type G domain maps to 8 to 290; that stretch reads HRYRNIGIMA…GVIHLLPSPA (283 aa). Residues 17 to 24, 88 to 92, and 142 to 145 each bind GTP; these read AHIDAGKT, DTPGH, and NKMD.

It belongs to the TRAFAC class translation factor GTPase superfamily. Classic translation factor GTPase family. EF-G/EF-2 subfamily.

Its subcellular location is the cytoplasm. In terms of biological role, catalyzes the GTP-dependent ribosomal translocation step during translation elongation. During this step, the ribosome changes from the pre-translocational (PRE) to the post-translocational (POST) state as the newly formed A-site-bound peptidyl-tRNA and P-site-bound deacylated tRNA move to the P and E sites, respectively. Catalyzes the coordinated movement of the two tRNA molecules, the mRNA and conformational changes in the ribosome. The polypeptide is Elongation factor G (Xylella fastidiosa (strain M12)).